The primary structure comprises 200 residues: Urease accessory protein UreG (200 aa).

Residue 8–15 (GPVGSGKT) participates in GTP binding.

This sequence belongs to the SIMIBI class G3E GTPase family. UreG subfamily. As to quaternary structure, homodimer. UreH, UreF and UreG form a complex that acts as a GTP-hydrolysis-dependent molecular chaperone, activating the urease apoprotein by helping to assemble the nickel containing metallocenter of UreC. The UreE protein probably delivers the nickel.

Its subcellular location is the cytoplasm. Functionally, facilitates the functional incorporation of the urease nickel metallocenter. This process requires GTP hydrolysis, probably effectuated by UreG. The protein is Urease accessory protein UreG of Helicobacter hepaticus (strain ATCC 51449 / 3B1).